The sequence spans 22 residues: Caerin-3.1 (22 aa).

K22 carries the post-translational modification Lysine amide.

The protein belongs to the frog skin active peptide (FSAP) family. Caerin subfamily. As to expression, expressed by the skin dorsal glands.

It localises to the secreted. In terms of biological role, antibacterial peptide with narrow spectrum of activity. Inhibits the formation of NO by neuronal nitric oxide synthase. This chain is Caerin-3.1, found in Litoria rothii (Roth's tree frog).